The sequence spans 8797 residues: Nesprin-1 (8797 aa).

Residues 1–289 (MATSRGASRC…KHYPDIHNAS (289 aa)) form an actin-binding region. Residues 1–8746 (MATSRGASRC…GRGFLFRVLR (8746 aa)) lie on the Cytoplasmic side of the membrane. Calponin-homology (CH) domains are found at residues 27–134 (IVQK…LYFQ) and 178–283 (GNAK…KHYP). 52 Spectrin repeats span residues 314–397 (REDR…SRLF), 398–502 (DWHI…HLMK), 503–609 (MEFL…SMLE), 610–703 (EVIS…YAQA), 704–815 (DEMD…QLLI), 816–923 (PLEE…KHVE), 924–1024 (TNSR…HLKI), 1025–1122 (DVEK…LMED), 1123–1246 (PDKW…NSLE), 1247–1335 (ELIS…ERRI), 1336–1444 (QVTL…MEMV), 1445–1550 (KTKW…ILGH), 1551–1653 (LSQQ…LENL), 1654–1763 (LAHW…LQSV), 1764–1879 (VAEH…SHAS), 1880–1976 (LSGI…ADAL), 1977–2081 (AVLK…QGQC), 2082–2195 (CGLI…LRVS), 2196–2303 (LSIW…KDFT), 2304–2401 (AQST…KTQA), 2402–2513 (SLQE…LQDC), 2514–2619 (ASEL…LRSC), 2620–2731 (QVAL…LESV), 2732–2838 (ISQW…VEEI), 2839–2962 (VKDH…SGQV), 2963–3062 (AQLE…QNKE), 3063–3171 (QILQ…LENL), 3172–3275 (KIQM…VSRL), 3276–3387 (DRIV…LEGA), 3388–3490 (LSKW…SEKL), 3491–3593 (VRLH…RTQF), 3594–3720 (NNVV…YSDW), 3721–3814 (YGST…LEKG), 3815–3920 (LHLA…LEAK), 3921–4028 (VKDH…QRMY), 4029–4139 (QSLE…KHLK), 4140–4235 (SELW…REED), 4236–4339 (LQRT…IQVS), 4340–4451 (VTNL…LNKA), 4452–4560 (LSEK…LEKN), 4561–4669 (LVSR…VQEA), 4670–4776 (ILAR…LEDT), 4777–4882 (TSAY…CESR), 4883–4991 (MVQS…LTEI), 4992–5099 (YSQC…LQRC), 5100–5209 (TAQW…LEDA), 5210–5318 (VDEW…GKLV), 5319–5424 (KQEL…EQSK), 5425–5522 (ATSQ…LSKL), 5523–5630 (NQAA…LQDA), 5631–5736 (AKDM…MQEA), and 5737–5842 (VVQY…PSAH). Residues 314 to 8666 (REDRVIFKEM…EKLLDVSSSQ (8353 aa)) adopt a coiled-coil conformation. Ser732 carries the post-translational modification Phosphoserine. The residue at position 2270 (Thr2270) is a Phosphothreonine. Residue Ser5657 is modified to Phosphoserine. The segment at 5859–5886 (PVTEESGEEGTNSEISSPPACRSPSPVA) is disordered. Spectrin repeat units follow at residues 5962-6071 (LERQ…LEEK), 6072-6178 (LNDQ…SLLE), 6374-6485 (RQSI…RLQQ), 6486-6581 (ILNF…RSGL), 6582-6691 (NQNL…LETW), 6692-6795 (SHLD…TILK), 6796-6902 (HWTR…QEKL), 6903-7020 (HQLQ…LEGL), 7021-7128 (LESW…LKSV), 7129-7237 (LDQW…SKAL), 7238-7350 (LQLW…LQAG), 7351-7454 (VLDY…LQSF), 7455-7558 (LLQH…RGII), 7559-7671 (DSQI…LAFL), 7672-7783 (LKDW…NEWA), 7784-7883 (VFSE…LKET), 7884-7997 (LVAV…IEET), 7998-8106 (WRLW…LKHF), and 8107-8216 (IGQR…LPLP). Ser8223 is modified (phosphoserine). Residues 8246–8279 (DSLLSPQPSSNLSLSLAQPLRSERSGRDTPASVD) are disordered. A compositionally biased stretch (low complexity) spans 8247–8265 (SLLSPQPSSNLSLSLAQPL). At Thr8274 the chain carries Phosphothreonine. Residues Ser8277, Ser8280, and Ser8305 each carry the phosphoserine modification. Spectrin repeat units follow at residues 8329–8438 (SALE…MKQN), 8439–8548 (LQKW…LQDA), and 8549–8666 (LMQC…SSSQ). Phosphothreonine is present on Thr8360. The interval 8671 to 8734 (SWSSADELDT…DSSLSEPGPG (64 aa)) is disordered. 2 stretches are compositionally biased toward polar residues: residues 8680–8696 (TSGS…PNRQ) and 8704–8729 (SLSQ…SSLS). In terms of domain architecture, KASH spans 8738–8797 (RGFLFRVLRAALPLQLLLLLLIGLACLVPMSEEDYSCALSNNFARSFHPMLRYTNGPPPL). Residues 8747–8767 (AALPLQLLLLLLIGLACLVPM) traverse the membrane as a helical; Anchor for type IV membrane protein segment. At 8768 to 8797 (SEEDYSCALSNNFARSFHPMLRYTNGPPPL) the chain is on the perinuclear space side.

The protein belongs to the nesprin family. As to quaternary structure, core component of LINC complexes which are composed of inner nuclear membrane SUN domain-containing proteins coupled to outer nuclear membrane KASH domain-containing nesprins. SUN and KASH domain-containing proteins seem to bind each other promiscuously; however, differentially expression of LINC complex constituents can give rise to specific assemblies. At least SUN1/2-containing core LINC complexes are proposed to be hexameric composed of three protomers of each KASH and SUN domain-containing protein. The SUN2:SYNE1/KASH1 LINC complex is a heterohexamer; the homotrimeric cloverleave-like conformation of the SUN domain is a prerequisite for LINC complex formation in which three separate SYNE1/KASH1 peptides bind at the interface of adjacent SUN domains. Self-associates. Interacts with SYNE3. Interacts with SPAG4/SUN4. May interact with MUSK. Interacts with F-actin via its N-terminal domain. Interacts with EMD and LMNA in vitro. Interacts (via KASH domain) with TMEM258. Post-translationally, the disulfid bond with SUN1 or SUN2 is required for stability of the respective LINC complex under tensile forces. In terms of tissue distribution, expressed in HeLa, A431, A172 and HaCaT cells (at protein level). Widely expressed. Highly expressed in skeletal and smooth muscles, heart, spleen, peripheral blood leukocytes, pancreas, cerebellum, stomach, kidney and placenta. Isoform GSRP-56 is predominantly expressed in heart and skeletal muscle (at protein level).

The protein resides in the nucleus outer membrane. The protein localises to the nucleus. Its subcellular location is the nucleus envelope. It localises to the cytoplasm. It is found in the cytoskeleton. The protein resides in the myofibril. The protein localises to the sarcomere. Its subcellular location is the golgi apparatus. Its function is as follows. Multi-isomeric modular protein which forms a linking network between organelles and the actin cytoskeleton to maintain the subcellular spatial organization. As a component of the LINC (LInker of Nucleoskeleton and Cytoskeleton) complex involved in the connection between the nuclear lamina and the cytoskeleton. The nucleocytoplasmic interactions established by the LINC complex play an important role in the transmission of mechanical forces across the nuclear envelope and in nuclear movement and positioning. May be involved in nucleus-centrosome attachment and nuclear migration in neural progenitors implicating LINC complex association with SUN1/2 and probably association with cytoplasmic dynein-dynactin motor complexes; SYNE1 and SYNE2 may act redundantly. Required for centrosome migration to the apical cell surface during early ciliogenesis. May be involved in nuclear remodeling during sperm head formation in spermatogenesis; a probable SUN3:SYNE1/KASH1 LINC complex may tether spermatid nuclei to posterior cytoskeletal structures such as the manchette. The chain is Nesprin-1 from Homo sapiens (Human).